Reading from the N-terminus, the 507-residue chain is TOM1-like protein 2 (507 aa).

The 133-residue stretch at Ala20–Pro152 folds into the VHS domain. The residue at position 160 (Ser160) is a Phosphoserine. A Phosphothreonine modification is found at Thr164. Positions Thr164–Tyr200 are disordered. The GAT domain maps to Glu219 to Arg307. Residues Asn329–Gly334 carry the Clathrin-binding motif. Positions Glu466 to Leu507 are disordered. Residues Glu498 to Leu507 show a composition bias toward basic and acidic residues.

Belongs to the TOM1 family. Interacts with clathrin, SRC and TOLLIP. Interacts with MYO6. Ubiquitously expressed. Splicing pattern displays tissue specific variation.

In terms of biological role, acts as a MYO6/Myosin VI adapter protein that targets myosin VI to endocytic structures. May also play a role in recruiting clathrin to endosomes. May regulate growth factor-induced mitogenic signaling. The protein is TOM1-like protein 2 (Tom1l2) of Mus musculus (Mouse).